The sequence spans 589 residues: MAISVQHVVVLLLSTLLIAITFFLFTSDNARFPFPSLSTTDYYTPIPKSPIPHRIVDVSSDQTPQKMKLNTSLEVGELKWDLCKGAESVDYIPCLDNYAAIKQLKSRRHMEHRERHCPEPSPKCLLPLPDNYKPPVPWPKSRDMIWYDNVPHPKLVEYKKEQNWVKKEGEFLVFPGGGTQFKFGVTHYVEFIEKALPSIKWGKNIRVVLDVGCGVASFGGSLLDKDVITMSFAPKDEHEAQIQFALERGIPATLSVIGTQQLTFPSNAFDLIHCARCRVHWDADGGKPLLELNRVLRPGGFFIWSATPVYRDNDRDSRIWNEMVSLTKSICWKVVTKTVDSSGIGLVIYQKPTSESCYNKRSTQDPPLCDKKEANGSWYVPLAKCLSKLPSGNVQSWPELWPKRLVSVKPQSISVKAETLKKDTEKWSASVSDVYLKHLAVNWSTVRNVMDMNAGFGGFAAALINLPLWVMNVVPVDKPDTLSVVYDRGLIGVYHDWCESVNTYPRTYDLLHSSFLLGDLTQRCEIVQVVAEIDRIVRPGGYLVVQDNMETIMKLESILGSLHWSTKIYEDRFLVGRKGFWRPAKPELR.

At 1 to 4 the chain is on the cytoplasmic side; it reads MAIS. The helical; Signal-anchor for type II membrane protein transmembrane segment at 5-25 threads the bilayer; the sequence is VQHVVVLLLSTLLIAITFFLF. The Lumenal portion of the chain corresponds to 26–589; sequence TSDNARFPFP…FWRPAKPELR (564 aa). Asn70, Asn375, and Asn442 each carry an N-linked (GlcNAc...) asparagine glycan.

Belongs to the methyltransferase superfamily.

The protein localises to the golgi apparatus membrane. This Arabidopsis thaliana (Mouse-ear cress) protein is Probable methyltransferase PMT23.